Here is a 145-residue protein sequence, read N- to C-terminus: Small ribosomal subunit protein bS6 (145 aa).

The segment covering 113–132 (ENMKKNERKAPKEPVKKDEE) has biased composition (basic and acidic residues). The segment at 113 to 145 (ENMKKNERKAPKEPVKKDEEENKESEEEITSEE) is disordered. The segment covering 133 to 145 (ENKESEEEITSEE) has biased composition (acidic residues).

It belongs to the bacterial ribosomal protein bS6 family.

Functionally, binds together with bS18 to 16S ribosomal RNA. The sequence is that of Small ribosomal subunit protein bS6 from Campylobacter hominis (strain ATCC BAA-381 / DSM 21671 / CCUG 45161 / LMG 19568 / NCTC 13146 / CH001A).